Consider the following 393-residue polypeptide: Protein TsgA (393 aa).

The next 12 membrane-spanning stretches (helical) occupy residues 11–31 (WISFLSYALTGALVIVTGMVM), 51–71 (FLNAGILISIFLNAWLMEIIP), 78–98 (FGFILMVLAVAGLMFSHSLAL), 101–121 (AAMFVLGLVSGITMSIGTFLI), 134–154 (LLFTDSFFSMAGMIFPMVAAF), 162–182 (WYWVYACIGLVYLAIFILTFG), 206–226 (IGVLFLAVAALCYILGQLGFI), 245–265 (ALVSDFWMSYMFGMWAFSFIL), 273–293 (ILTVLAGMAAVLMYLFITGTQ), 298–318 (WFILTLGFFSSAIYTSIITLG), 332–352 (FILTCGTIGTMLTFVVTGPIV), and 361–381 (LLTANGLYAVVFVMCFALGFV).

This sequence belongs to the major facilitator superfamily. TsgA family.

The protein resides in the cell inner membrane. In Salmonella agona (strain SL483), this protein is Protein TsgA.